The primary structure comprises 387 residues: Putative actin-29 (387 aa).

The protein belongs to the actin family.

It localises to the cytoplasm. The protein localises to the cytoskeleton. The enzyme catalyses ATP + H2O = ADP + phosphate + H(+). Functionally, actins are highly conserved proteins that are involved in various types of cell motility and are ubiquitously expressed in all eukaryotic cells. Multiple isoforms are involved in various cellular functions such as cytoskeleton structure, cell mobility, chromosome movement and muscle contraction. The sequence is that of Putative actin-29 (act29) from Dictyostelium discoideum (Social amoeba).